The chain runs to 217 residues: Octanoyltransferase (217 aa).

In terms of domain architecture, BPL/LPL catalytic spans 35–214 (DEAGERIWLL…TLPAFLDKLR (180 aa)). Substrate is bound by residues 73-80 (RGGRYTYH), 145-147 (AIG), and 158-160 (GFS). Residue Cys176 is the Acyl-thioester intermediate of the active site.

It belongs to the LipB family.

Its subcellular location is the cytoplasm. The catalysed reaction is octanoyl-[ACP] + L-lysyl-[protein] = N(6)-octanoyl-L-lysyl-[protein] + holo-[ACP] + H(+). The protein operates within protein modification; protein lipoylation via endogenous pathway; protein N(6)-(lipoyl)lysine from octanoyl-[acyl-carrier-protein]: step 1/2. Catalyzes the transfer of endogenously produced octanoic acid from octanoyl-acyl-carrier-protein onto the lipoyl domains of lipoate-dependent enzymes. Lipoyl-ACP can also act as a substrate although octanoyl-ACP is likely to be the physiological substrate. The sequence is that of Octanoyltransferase from Sphingopyxis alaskensis (strain DSM 13593 / LMG 18877 / RB2256) (Sphingomonas alaskensis).